Here is a 275-residue protein sequence, read N- to C-terminus: Bis(5'-nucleosyl)-tetraphosphatase, symmetrical (275 aa).

It belongs to the Ap4A hydrolase family.

It catalyses the reaction P(1),P(4)-bis(5'-adenosyl) tetraphosphate + H2O = 2 ADP + 2 H(+). Its function is as follows. Hydrolyzes diadenosine 5',5'''-P1,P4-tetraphosphate to yield ADP. The sequence is that of Bis(5'-nucleosyl)-tetraphosphatase, symmetrical from Stutzerimonas stutzeri (strain A1501) (Pseudomonas stutzeri).